We begin with the raw amino-acid sequence, 138 residues long: Small ribosomal subunit protein uS11c (138 aa).

Belongs to the universal ribosomal protein uS11 family. Part of the 30S ribosomal subunit.

It is found in the plastid. It localises to the chloroplast. The sequence is that of Small ribosomal subunit protein uS11c from Acorus calamus (Sweet flag).